A 325-amino-acid polypeptide reads, in one-letter code: Heat-inducible transcription repressor HrcA (325 aa).

The protein belongs to the HrcA family.

Functionally, negative regulator of class I heat shock genes (grpE-dnaK-dnaJ and groELS operons). Prevents heat-shock induction of these operons. The sequence is that of Heat-inducible transcription repressor HrcA from Staphylococcus aureus (strain MRSA252).